The primary structure comprises 137 residues: uncharacterized protein (137 aa).

Belongs to the ycf72 family.

It is found in the plastid. The protein resides in the chloroplast. This is an uncharacterized protein from Oryza nivara (Indian wild rice).